The primary structure comprises 563 residues: Tripeptidyl-peptidase 1 (563 aa).

A signal peptide spans 1-19 (MGLQACLLGLFALILSGKC). Residues 20 to 195 (SYSPEPDQRR…PEPQVTGTVG (176 aa)) constitute a propeptide, removed in mature form. A disulfide bridge links Cys-111 with Cys-122. In terms of domain architecture, Peptidase S53 spans 199–563 (GVTPSVIRKR…PALLKTLLNP (365 aa)). 2 N-linked (GlcNAc...) asparagine glycosylation sites follow: Asn-210 and Asn-222. Catalysis depends on charge relay system residues Glu-272 and Asp-276. Residues Asn-286, Asn-313, and Asn-443 are each glycosylated (N-linked (GlcNAc...) asparagine). Disulfide bonds link Cys-365/Cys-526 and Cys-522/Cys-537. Residue Ser-475 is the Charge relay system of the active site. Positions 517 and 518 each coordinate Ca(2+). Positions 539, 541, and 543 each coordinate Ca(2+).

In terms of assembly, monomer. Interacts with CLN5. Interacts with CLN3. Ca(2+) serves as cofactor. Post-translationally, activated by autocatalytic proteolytical processing upon acidification. N-glycosylation is required for processing and activity. Detected in all tissues examined with highest levels in heart and placenta and relatively similar levels in other tissues.

The protein localises to the lysosome. Its subcellular location is the melanosome. The catalysed reaction is Release of an N-terminal tripeptide from a polypeptide, but also has endopeptidase activity.. Inhibited by diisopropyl fluorophosphate (DFP). Lysosomal serine protease with tripeptidyl-peptidase I activity. May act as a non-specific lysosomal peptidase which generates tripeptides from the breakdown products produced by lysosomal proteinases. Requires substrates with an unsubstituted N-terminus. The protein is Tripeptidyl-peptidase 1 (TPP1) of Homo sapiens (Human).